The chain runs to 425 residues: Glutamate-1-semialdehyde 2,1-aminomutase (425 aa).

At Lys265 the chain carries N6-(pyridoxal phosphate)lysine.

Belongs to the class-III pyridoxal-phosphate-dependent aminotransferase family. HemL subfamily. In terms of assembly, homodimer. Requires pyridoxal 5'-phosphate as cofactor.

It localises to the cytoplasm. It carries out the reaction (S)-4-amino-5-oxopentanoate = 5-aminolevulinate. The protein operates within porphyrin-containing compound metabolism; protoporphyrin-IX biosynthesis; 5-aminolevulinate from L-glutamyl-tRNA(Glu): step 2/2. This chain is Glutamate-1-semialdehyde 2,1-aminomutase, found in Clostridium perfringens (strain 13 / Type A).